We begin with the raw amino-acid sequence, 236 residues long: MAPASSHRGHQWICDLVRGSCLLLLLVVSNLLLCQGVEDYAPYCKNQPGNCRIPLQSLFERATLVASNNYRLAREMFNEFNKQFGEGKNFTSKVINSCHTEFMTTPNNKEAAANTEDEALLRLVISLLHSWDEPLHQAVTELLHRNGASPDILARAKEIEDKTKVLLEGVEMIQKRVHPGEKKNEPYPVWSEKSSLTADDEDVRQTAFYRMFHCLHRDSSKISTYINLLKCRFTPC.

The first 36 residues, 1–36 (MAPASSHRGHQWICDLVRGSCLLLLLVVSNLLLCQG), serve as a signal peptide directing secretion. Residue Asn89 is glycosylated (N-linked (GlcNAc...) asparagine). 2 disulfides stabilise this stretch: Cys98–Cys214 and Cys231–Cys236.

Belongs to the somatotropin/prolactin family.

It localises to the secreted. The sequence is that of Chorionic somatomammotropin hormone 1 (CSH1) from Bos taurus (Bovine).